The primary structure comprises 433 residues: Probable dipeptidase (433 aa).

Residue C20 is part of the active site.

This sequence belongs to the peptidase C69 family.

It carries out the reaction an L-aminoacyl-L-amino acid + H2O = 2 an L-alpha-amino acid. This chain is Probable dipeptidase (pipD), found in Salmonella dublin.